The chain runs to 311 residues: Methionyl-tRNA formyltransferase (311 aa).

109-112 contacts (6S)-5,6,7,8-tetrahydrofolate; sequence SKLP.

It belongs to the Fmt family.

The enzyme catalyses L-methionyl-tRNA(fMet) + (6R)-10-formyltetrahydrofolate = N-formyl-L-methionyl-tRNA(fMet) + (6S)-5,6,7,8-tetrahydrofolate + H(+). Attaches a formyl group to the free amino group of methionyl-tRNA(fMet). The formyl group appears to play a dual role in the initiator identity of N-formylmethionyl-tRNA by promoting its recognition by IF2 and preventing the misappropriation of this tRNA by the elongation apparatus. This Mycoplasma pneumoniae (strain ATCC 29342 / M129 / Subtype 1) (Mycoplasmoides pneumoniae) protein is Methionyl-tRNA formyltransferase (fmt).